Reading from the N-terminus, the 255-residue chain is GTP cyclohydrolase FolE2 (255 aa).

This sequence belongs to the GTP cyclohydrolase IV family.

It carries out the reaction GTP + H2O = 7,8-dihydroneopterin 3'-triphosphate + formate + H(+). Its pathway is cofactor biosynthesis; 7,8-dihydroneopterin triphosphate biosynthesis; 7,8-dihydroneopterin triphosphate from GTP: step 1/1. In terms of biological role, converts GTP to 7,8-dihydroneopterin triphosphate. The polypeptide is GTP cyclohydrolase FolE2 (Syntrophus aciditrophicus (strain SB)).